Here is a 311-residue protein sequence, read N- to C-terminus: MSNSIVIQTNSTVIEDMKQQYKHSLSPKTPQGGIFMAKVPSCTITAYKSGKVMFQGGRAEAEAARWQTVPQTPKIAVKKSVDSHRYAPPASIGTMSIVGSDEVGTGDFFGPMTVVAVYVDAKQIPLLKELGVKDSKNLNDEQITAIAKQLLHVVPYSSLVLHNEKYNELFDKGNNQGKLKALLHNKAITNLLAKIAPTKPEGVLIDQFTQPDTYYKYLAKQKQVQRENVYFATKGESVHLAVAAASILARYSFVKQFNELSKKAGMPLPKGAGKQVDIAAAKLIQKLGKERLPEFVKLHFANTEKAFRLLK.

In terms of domain architecture, RNase H type-2 spans 95-311 (MSIVGSDEVG…NTEKAFRLLK (217 aa)). Residues aspartate 101, glutamate 102, and aspartate 206 each coordinate a divalent metal cation.

This sequence belongs to the RNase HII family. RnhC subfamily. Requires Mn(2+) as cofactor. Mg(2+) is required as a cofactor.

The protein resides in the cytoplasm. The catalysed reaction is Endonucleolytic cleavage to 5'-phosphomonoester.. Its function is as follows. Endonuclease that specifically degrades the RNA of RNA-DNA hybrids. The polypeptide is Ribonuclease HIII (Bacillus anthracis (strain A0248)).